The primary structure comprises 647 residues: Type II methyltransferase M.FokI (647 aa).

Short sequence motifs (adenine-specific methylase) lie at residues 218–221 (DPPY) and 548–551 (DPPY).

The protein belongs to the N(4)/N(6)-methyltransferase family. In terms of assembly, monomer.

It carries out the reaction a 2'-deoxyadenosine in DNA + S-adenosyl-L-methionine = an N(6)-methyl-2'-deoxyadenosine in DNA + S-adenosyl-L-homocysteine + H(+). Functionally, an alpha subtype methylase that recognizes the asymmetric double-stranded sequence 5'-GGATG-3', methylates A-3 of both strands, and protects the DNA from cleavage by the FokI endonuclease. This chain is Type II methyltransferase M.FokI, found in Planomicrobium okeanokoites (Planococcus okeanokoites).